The following is a 660-amino-acid chain: Epithelial sodium channel subunit gamma (660 aa).

At 1–55 (MSKSGKKLTQKLKKNLPVTGPQAPTLYELMQWYCLNTNTHGCRRIVVSKGRLRRW) the chain is on the cytoplasmic side. Residues 56–76 (IWISLTLCAVAVIFWQCALLL) traverse the membrane as a helical segment. Residues 77–537 (MSYYSVSASI…VTLLSNFGGQ (461 aa)) lie on the Extracellular side of the membrane. 8 cysteine pairs are disulfide-bonded: Cys-101-Cys-286, Cys-209-Cys-217, Cys-263-Cys-270, Cys-375-Cys-460, Cys-397-Cys-456, Cys-401-Cys-452, Cys-410-Cys-437, and Cys-412-Cys-426. The chain crosses the membrane as a helical span at residues 538-558 (LGLWMSCSMICVLEIIEVFFI). Over 559–660 (DSFWVVLRQR…IDSDEDVERL (102 aa)) the chain is Cytoplasmic.

Belongs to the amiloride-sensitive sodium channel (TC 1.A.6) family. SCNN1G subfamily. Component of the heterotrimeric epithelial sodium channel (ENaC) composed of an alpha/SCNN1A, a beta/SCNN1B and a gamma/SCNN1G subunit.

The protein resides in the apical cell membrane. The enzyme catalyses Na(+)(in) = Na(+)(out). Its activity is regulated as follows. Originally identified and characterized by its inhibition by the diuretic drug amiloride. In terms of biological role, this is one of the three pore-forming subunits of the heterotrimeric epithelial sodium channel (ENaC), a critical regulator of sodium balance and fluid homeostasis. ENaC operates in epithelial tissues, where it mediates the electrodiffusion of sodium ions from extracellular fluid through the apical membrane of cells, with water following osmotically. The chain is Epithelial sodium channel subunit gamma (scnn1g-a) from Xenopus laevis (African clawed frog).